The following is a 150-amino-acid chain: Large ribosomal subunit protein bL9 (150 aa).

Belongs to the bacterial ribosomal protein bL9 family.

In terms of biological role, binds to the 23S rRNA. The chain is Large ribosomal subunit protein bL9 from Paraburkholderia phytofirmans (strain DSM 17436 / LMG 22146 / PsJN) (Burkholderia phytofirmans).